The sequence spans 251 residues: Triosephosphate isomerase (251 aa).

Asn-10 and Lys-12 together coordinate substrate. His-96 acts as the Electrophile in catalysis. Glu-168 (proton acceptor) is an active-site residue.

The protein belongs to the triosephosphate isomerase family. As to quaternary structure, homodimer.

The enzyme catalyses D-glyceraldehyde 3-phosphate = dihydroxyacetone phosphate. It functions in the pathway carbohydrate biosynthesis; gluconeogenesis. Its pathway is carbohydrate degradation; glycolysis; D-glyceraldehyde 3-phosphate from glycerone phosphate: step 1/1. The protein is Triosephosphate isomerase (tpiA) of Aspergillus oryzae (strain ATCC 42149 / RIB 40) (Yellow koji mold).